A 468-amino-acid polypeptide reads, in one-letter code: Protein C-ets-2 (468 aa).

One can recognise a PNT domain in the interval 85-170 (ATFSGFQKEQ…EHLEQMIKEN (86 aa)). Phosphoserine is present on residues S220 and S225. The interval 262–290 (VNLLNNNSGKPKDHDSPENGGDSFESSDS) is disordered. Residues S294, S297, and S300 each carry the phosphoserine modification. The segment at residues 362–442 (IQLWQFLLEL…SGKRYVYRFV (81 aa)) is a DNA-binding region (ETS).

The protein belongs to the ETS family. Post-translationally, phosphorylation by CDK10 at Ser-220 and Ser-225 creates a phosphodegron that targets ETS2 for proteasomal degradation.

It is found in the nucleus. Its function is as follows. Transcription factor activating transcription. Binds specifically the GGA DNA motif in gene promoters and stimulates transcription of those genes. In Mus musculus (Mouse), this protein is Protein C-ets-2 (Ets2).